We begin with the raw amino-acid sequence, 118 residues long: Large ribosomal subunit protein bL20 (118 aa).

The protein belongs to the bacterial ribosomal protein bL20 family.

Functionally, binds directly to 23S ribosomal RNA and is necessary for the in vitro assembly process of the 50S ribosomal subunit. It is not involved in the protein synthesizing functions of that subunit. The polypeptide is Large ribosomal subunit protein bL20 (Pseudomonas aeruginosa (strain LESB58)).